The chain runs to 170 residues: Adenine phosphoribosyltransferase (170 aa).

The protein belongs to the purine/pyrimidine phosphoribosyltransferase family. As to quaternary structure, homodimer.

It is found in the cytoplasm. It catalyses the reaction AMP + diphosphate = 5-phospho-alpha-D-ribose 1-diphosphate + adenine. It participates in purine metabolism; AMP biosynthesis via salvage pathway; AMP from adenine: step 1/1. Its function is as follows. Catalyzes a salvage reaction resulting in the formation of AMP, that is energically less costly than de novo synthesis. This chain is Adenine phosphoribosyltransferase, found in Halothermothrix orenii (strain H 168 / OCM 544 / DSM 9562).